Consider the following 173-residue polypeptide: MARVEL domain-containing protein 1 (173 aa).

An N-acetylmethionine modification is found at M1. Residues 1–29 (MLPPPPRQPPPQARAARGAVRLQRPFLRS) lie on the Cytoplasmic side of the membrane. Residues 26-166 (FLRSPLGVLR…SALYGCGRRC (141 aa)) enclose the MARVEL domain. A helical transmembrane segment spans residues 30 to 50 (PLGVLRLLQLLAGAAFWITIA). The Extracellular portion of the chain corresponds to 51–59 (TSKYQGPVH). Residues 60 to 80 (FALFVSVLFWLLTLGLYFLTL) traverse the membrane as a helical segment. The Cytoplasmic segment spans residues 81–94 (LGKHELVPVLGSRW). The chain crosses the membrane as a helical span at residues 95–115 (LMVNVAHDVLAAALYGAATGI). At 116–138 (MSDQMQRHSYCNLKDYPLPCAYH) the chain is on the extracellular side. Residues 139–159 (AFLAAAVCGGVCHGLYLLSAL) form a helical membrane-spanning segment. The Cytoplasmic portion of the chain corresponds to 160 to 173 (YGCGRRCQGKQEVA).

As to expression, widely expressed in normal tissues. Down-regulated in multiple primary tumors.

The protein resides in the cell membrane. Its subcellular location is the cytoplasm. It localises to the cytoskeleton. The protein localises to the nucleus. Its function is as follows. Microtubule-associated protein that exhibits cell cycle-dependent localization and can inhibit cell proliferation and migration. The sequence is that of MARVEL domain-containing protein 1 (MARVELD1) from Homo sapiens (Human).